The sequence spans 305 residues: Mycothiol acetyltransferase (305 aa).

N-acetyltransferase domains are found at residues 10–153 and 156–305; these read DRLD…LVVP and ISLR…YARA. Glu38 is a 1D-myo-inositol 2-(L-cysteinylamino)-2-deoxy-alpha-D-glucopyranoside binding site. 82-84 contacts acetyl-CoA; the sequence is LAV. Positions 183, 225, and 238 each coordinate 1D-myo-inositol 2-(L-cysteinylamino)-2-deoxy-alpha-D-glucopyranoside. Residues 242–244 and 249–255 contribute to the acetyl-CoA site; these read VAI and QGRGLGR. A 1D-myo-inositol 2-(L-cysteinylamino)-2-deoxy-alpha-D-glucopyranoside-binding site is contributed by Tyr276. 281 to 286 is a binding site for acetyl-CoA; the sequence is NESALH.

Belongs to the acetyltransferase family. MshD subfamily. As to quaternary structure, monomer.

It catalyses the reaction 1D-myo-inositol 2-(L-cysteinylamino)-2-deoxy-alpha-D-glucopyranoside + acetyl-CoA = mycothiol + CoA + H(+). Catalyzes the transfer of acetyl from acetyl-CoA to desacetylmycothiol (Cys-GlcN-Ins) to form mycothiol. This is Mycothiol acetyltransferase from Rhodococcus jostii (strain RHA1).